Consider the following 79-residue polypeptide: Sec-independent protein translocase protein TatA (79 aa).

A helical membrane pass occupies residues 1–21 (MGGFTSIWHWVIVLLVIVLLF). Positions 48–79 (EEEAKNEPKTLDAQVTQAKVHESSEIKNKQEG) are disordered. A compositionally biased stretch (basic and acidic residues) spans 66–79 (KVHESSEIKNKQEG).

It belongs to the TatA/E family. As to quaternary structure, the Tat system comprises two distinct complexes: a TatABC complex, containing multiple copies of TatA, TatB and TatC subunits, and a separate TatA complex, containing only TatA subunits. Substrates initially bind to the TatABC complex, which probably triggers association of the separate TatA complex to form the active translocon.

The protein resides in the cell inner membrane. Part of the twin-arginine translocation (Tat) system that transports large folded proteins containing a characteristic twin-arginine motif in their signal peptide across membranes. TatA could form the protein-conducting channel of the Tat system. The chain is Sec-independent protein translocase protein TatA from Helicobacter acinonychis (strain Sheeba).